The following is a 234-amino-acid chain: Enolase-phosphatase E1 (234 aa).

Mg(2+) contacts are provided by Asp13 and Glu15. Residues 127-128 (SS) and Lys164 each bind substrate. Asp191 serves as a coordination point for Mg(2+).

The protein belongs to the HAD-like hydrolase superfamily. MasA/MtnC family. In terms of assembly, monomer. The cofactor is Mg(2+).

Its subcellular location is the cytoplasm. The protein resides in the nucleus. The enzyme catalyses 5-methylsulfanyl-2,3-dioxopentyl phosphate + H2O = 1,2-dihydroxy-5-(methylsulfanyl)pent-1-en-3-one + phosphate. Its pathway is amino-acid biosynthesis; L-methionine biosynthesis via salvage pathway; L-methionine from S-methyl-5-thio-alpha-D-ribose 1-phosphate: step 3/6. It participates in amino-acid biosynthesis; L-methionine biosynthesis via salvage pathway; L-methionine from S-methyl-5-thio-alpha-D-ribose 1-phosphate: step 4/6. Functionally, bifunctional enzyme that catalyzes the enolization of 2,3-diketo-5-methylthiopentyl-1-phosphate (DK-MTP-1-P) into the intermediate 2-hydroxy-3-keto-5-methylthiopentenyl-1-phosphate (HK-MTPenyl-1-P), which is then dephosphorylated to form the acireductone 1,2-dihydroxy-3-keto-5-methylthiopentene (DHK-MTPene). This chain is Enolase-phosphatase E1, found in Podospora anserina (strain S / ATCC MYA-4624 / DSM 980 / FGSC 10383) (Pleurage anserina).